Reading from the N-terminus, the 374-residue chain is o-succinylbenzoate synthase (374 aa).

K164 acts as the Proton donor in catalysis. Residues D189, E214, and D239 each coordinate Mg(2+). K263 functions as the Proton acceptor in the catalytic mechanism.

It belongs to the mandelate racemase/muconate lactonizing enzyme family. MenC type 2 subfamily. In terms of assembly, homodimer. A divalent metal cation serves as cofactor.

The enzyme catalyses (1R,6R)-6-hydroxy-2-succinyl-cyclohexa-2,4-diene-1-carboxylate = 2-succinylbenzoate + H2O. The protein operates within quinol/quinone metabolism; 1,4-dihydroxy-2-naphthoate biosynthesis; 1,4-dihydroxy-2-naphthoate from chorismate: step 4/7. It functions in the pathway quinol/quinone metabolism; menaquinone biosynthesis. Functionally, converts 2-succinyl-6-hydroxy-2,4-cyclohexadiene-1-carboxylate (SHCHC) to 2-succinylbenzoate (OSB). Also acts as a N-succinylamino acid racemase (NSAR) that catalyzes the racemization of N-succinyl-L-phenylglycine. L.innocua has the menaquinone synthesis pathway, indicating that the species requires OSBS activity. However, the NSAR/OSBS is not encoded in the menaquinone operon, raising the possibility that both NSAR and OSBS are biological functions. The polypeptide is o-succinylbenzoate synthase (Listeria innocua serovar 6a (strain ATCC BAA-680 / CLIP 11262)).